We begin with the raw amino-acid sequence, 745 residues long: Single-minded homolog 1-A (745 aa).

Positions methionine 1–arginine 53 constitute a bHLH domain. PAS domains follow at residues glycine 77–histidine 147 and proline 218–glycine 288. The region spanning glutamate 336 to serine 745 is the Single-minded C-terminal domain. The span at threonine 350–threonine 364 shows a compositional bias: polar residues. 2 disordered regions span residues threonine 350 to serine 413 and glutamate 529 to lysine 563. Residues arginine 368–serine 387 carry the Nuclear localization signal motif. Residues valine 369 to threonine 381 are compositionally biased toward basic residues. Residues alanine 532–aspartate 544 show a composition bias toward low complexity.

Efficient DNA binding requires dimerization with another bHLH protein. Heterodimer of sim1a and arnt. As to expression, expressed in embryonic forebrain at the eleven somite stage. Detected in brain throughout embryonic development.

The protein localises to the nucleus. Functionally, transcriptional factor that may have pleiotropic effects during embryogenesis and in the adult. The polypeptide is Single-minded homolog 1-A (sim1a) (Danio rerio (Zebrafish)).